The chain runs to 1489 residues: ABC transporter FUM19 (1489 aa).

Transmembrane regions (helical) follow at residues 33–53, 84–104, 116–136, 143–163, 264–284, 302–322, 373–393, 397–417, 482–502, and 511–531; these read IIFF…RIFV, CFSS…ALSY, LLSI…RTLW, LEYG…FAVW, LLLP…QAFL, WGLI…TSLY, FLNL…AWFL, VGIA…GVSI, IASL…MLAA, and HKVY…GSIF. Residues 272–539 enclose the ABC transmembrane type-1 1 domain; it reads IALIGLSLAQ…IFRSVSPLMS (268 aa). Residues 591–823 enclose the ABC transporter 1 domain; sequence VKVIQASFGW…YQSHLQSLCI (233 aa). N-linked (GlcNAc...) asparagine glycosylation is found at Asn-612 and Asn-616. Residue 625–632 coordinates ATP; that stretch reads GPVGSGKS. The N-linked (GlcNAc...) asparagine glycan is linked to Asn-670. Residues 852–862 show a composition bias toward basic and acidic residues; that stretch reads EQTRSSRRGAD. Residues 852–874 form a disordered region; sequence EQTRSSRRGADNQETIASGADSS. Residues 863-874 are compositionally biased toward polar residues; that stretch reads NQETIASGADSS. A run of 6 helical transmembrane segments spans residues 890–910, 945–965, 977–999, 1031–1051, 1120–1140, and 1149–1169; these read AVPP…GFLY, ILAL…FALI, AITR…NYFS, AASS…LYFV, WLLF…VALV, and GFAG…TNVV. Positions 902 to 1187 constitute an ABC transmembrane type-1 2 domain; it reads SSLSYGFLYS…SMGAVSRLKA (286 aa). Residues 1214–1485 enclose the ABC transporter 2 domain; it reads IKIDGVSASY…KEGKFRALWE (272 aa). Residue 1254–1261 coordinates ATP; sequence GRTGSGKS.

It belongs to the ABC transporter superfamily. ABCC family. Conjugate transporter (TC 3.A.1.208) subfamily.

It localises to the cell membrane. Functionally, ABC transporter that may provide the dual role of fumonisin export and self-protection by allowing the fungus to evade the harmful effect of its own fumonisin production. Plays a role in the repression of the gene cluster that mediates fumonisin biosynthesis. This Gibberella moniliformis (strain M3125 / FGSC 7600) (Maize ear and stalk rot fungus) protein is ABC transporter FUM19.